The sequence spans 1492 residues: Putative leucine-rich repeat-containing protein DDB_G0290503 (1492 aa).

Residues 2-111 (SILLEGYLEK…WIEGIKDAIK (110 aa)) enclose the PH domain. LRR repeat units lie at residues 123 to 144 (LDGL…IKHL), 180 to 204 (IKSL…VEKL), 258 to 284 (QESL…QFEK), 329 to 351 (KNQF…SIVD), 352 to 375 (DKLK…EIDN), 389 to 413 (ISKI…SIDK), 439 to 462 (LEKL…ILEI), 519 to 543 (INEL…NQSS), 551 to 575 (LNQL…IIER), 579 to 603 (IDQL…NESS), 632 to 656 (INEL…NQSS), 728 to 752 (LDEL…NQSS), 806 to 830 (LKSL…NQDS), 831 to 855 (LDEL…NQSS), 895 to 919 (INEL…NESS), 927 to 951 (LIQL…IIER), 955 to 979 (LNQL…NQSS), 1013 to 1036 (NEKL…NESL), 1044 to 1068 (FENL…IIDV), 1138 to 1164 (LQDL…ELKE), and 1210 to 1232 (NAHL…GFNE). A disordered region spans residues 1272–1292 (RSSSSSLHQQQQMISPDLSNS). Residues 1274-1286 (SSSSLHQQQQMIS) are compositionally biased toward low complexity. 2 LRR repeats span residues 1424–1444 (SSEK…KYFF) and 1445–1468 (AIAR…IFDM).

This chain is Putative leucine-rich repeat-containing protein DDB_G0290503, found in Dictyostelium discoideum (Social amoeba).